The sequence spans 529 residues: Basal body-orientation factor 1 (529 aa).

Basic residues predominate over residues 1 to 13 (MPSKGKDKKKGKS). A disordered region spans residues 1–22 (MPSKGKDKKKGKSKGKDTKKLI). Coiled-coil stretches lie at residues 85–201 (LKKQ…EAEK) and 271–361 (VKEK…EVER).

The protein belongs to the BBOF1 family. As to quaternary structure, interacts with MNS1 and ODF2.

It localises to the cytoplasm. It is found in the cytoskeleton. The protein localises to the cilium basal body. The protein resides in the flagellum axoneme. Its function is as follows. Plays an essential role in sperm motility and male fertility by stabilizing the sperm flagellar axonemal structure. May be required for the stability of ODF2 and MANS1 proteins. Dispensable for the assembly and function of motile cilia. The chain is Basal body-orientation factor 1 from Homo sapiens (Human).